The chain runs to 198 residues: MVEKHLLEFLEKLQFLIAKNVKISHYGIENVKKICGVDIAYKGNLGFSVGVSMDINSGDYNYKSYVGEVNFPYIPGFLFMREAPLMIKAIEGLDCHLLLVDGHGIAHPRKSGIAAVIGVLLDFPTIGVAKSRLTGDLVNESEITYVYLNGEKVGVKFGRYFYSPGNKVDLQDCIELGKRGYPKVLKIADMLTKKIKKE.

The Mg(2+) site is built by D38 and D101.

Belongs to the endonuclease V family. Requires Mg(2+) as cofactor.

It is found in the cytoplasm. The catalysed reaction is Endonucleolytic cleavage at apurinic or apyrimidinic sites to products with a 5'-phosphate.. DNA repair enzyme involved in the repair of deaminated bases. Selectively cleaves double-stranded DNA at the second phosphodiester bond 3' to a deoxyinosine leaving behind the intact lesion on the nicked DNA. This Saccharolobus islandicus (strain M.14.25 / Kamchatka #1) (Sulfolobus islandicus) protein is Endonuclease V.